The sequence spans 252 residues: Homeobox protein EMX2 (252 aa).

Residues 154–213 (PKRIRTAFSPSQLLRLEHAFEKNHYVVGAERKQLAHSLSLTETQVKVWFQNRRTKFKRQK) constitute a DNA-binding region (homeobox). The disordered stretch occupies residues 212 to 252 (QKLEEEGSDSQQKKKGTHHINRWRIATKQASPEEIDVTSDD). Residues 224-233 (KKKGTHHINR) are compositionally biased toward basic residues.

This sequence belongs to the EMX homeobox family. Interacts with translation initiation factor EIF4E. In terms of tissue distribution, cerebral cortex.

The protein localises to the nucleus. The protein resides in the cell projection. It localises to the axon. Its function is as follows. Transcription factor, which in cooperation with EMX1, acts to generate the boundary between the roof and archipallium in the developing brain. May function in combination with OTX1/2 to specify cell fates in the developing central nervous system. In the inner ear, it controls the distribution of GPR156 at hair cell boundaries, and regulates the organization of stereociliary bundles in opposite orientations across the line of polarity reversal (LPR). This is Homeobox protein EMX2 (EMX2) from Homo sapiens (Human).